A 202-amino-acid chain; its full sequence is Small ribosomal subunit protein uS5 (202 aa).

The S5 DRBM domain maps to 42-105 (LKDEVLKIMP…ILAKLSIVPV (64 aa)). Phosphothreonine is present on threonine 192.

It belongs to the universal ribosomal protein uS5 family. Component of the small ribosomal subunit. Interacts with zinc finger protein ZNF277 (via zinc-finger domains); the interaction is direct; the interaction is extra-ribosomal. Interaction with ZNF277 competes with the binding of RPS2 to protein arginine methyltransferase PRMT3. In terms of processing, citrullinated by PADI4 in the Arg/Gly-rich region. Post-translationally, asymmetric arginine dimethylation by PRMT3 occurs at multiple sites in the Arg/Gly-rich region. Monoubiquitinated by RNF10 when a ribosome has stalled during translation, leading to its degradation by the proteasome. Deubiquitinated by USP10, preventing degradation by the proteasome and promoting 40S ribosome subunit recycling following ribosome dissociation.

Its subcellular location is the cytoplasm. It localises to the nucleus. It is found in the nucleolus. Component of the ribosome, a large ribonucleoprotein complex responsible for the synthesis of proteins in the cell. The small ribosomal subunit (SSU) binds messenger RNAs (mRNAs) and translates the encoded message by selecting cognate aminoacyl-transfer RNA (tRNA) molecules. The large subunit (LSU) contains the ribosomal catalytic site termed the peptidyl transferase center (PTC), which catalyzes the formation of peptide bonds, thereby polymerizing the amino acids delivered by tRNAs into a polypeptide chain. The nascent polypeptides leave the ribosome through a tunnel in the LSU and interact with protein factors that function in enzymatic processing, targeting, and the membrane insertion of nascent chains at the exit of the ribosomal tunnel. Plays a role in the assembly and function of the 40S ribosomal subunit. Mutations in this protein affects the control of translational fidelity. Involved in nucleolar processing of pre-18S ribosomal RNA and ribosome assembly. The chain is Small ribosomal subunit protein uS5 (RPS2) from Cricetulus griseus (Chinese hamster).